Reading from the N-terminus, the 155-residue chain is 6,7-dimethyl-8-ribityllumazine synthase (155 aa).

5-amino-6-(D-ribitylamino)uracil is bound by residues Phe-23, 57–59 (AFE), and 81–83 (AVI). 86–87 (ST) serves as a coordination point for (2S)-2-hydroxy-3-oxobutyl phosphate. His-89 serves as the catalytic Proton donor. Residue Phe-114 coordinates 5-amino-6-(D-ribitylamino)uracil. Arg-128 lines the (2S)-2-hydroxy-3-oxobutyl phosphate pocket.

The protein belongs to the DMRL synthase family.

The enzyme catalyses (2S)-2-hydroxy-3-oxobutyl phosphate + 5-amino-6-(D-ribitylamino)uracil = 6,7-dimethyl-8-(1-D-ribityl)lumazine + phosphate + 2 H2O + H(+). The protein operates within cofactor biosynthesis; riboflavin biosynthesis; riboflavin from 2-hydroxy-3-oxobutyl phosphate and 5-amino-6-(D-ribitylamino)uracil: step 1/2. In terms of biological role, catalyzes the formation of 6,7-dimethyl-8-ribityllumazine by condensation of 5-amino-6-(D-ribitylamino)uracil with 3,4-dihydroxy-2-butanone 4-phosphate. This is the penultimate step in the biosynthesis of riboflavin. The protein is 6,7-dimethyl-8-ribityllumazine synthase of Desulfatibacillum aliphaticivorans.